A 109-amino-acid chain; its full sequence is Cell division suppressor protein YneA (109 aa).

Residues 39–90 (SEVNVSEGDSLWALADQYAGKSDMAKADFVSWVEKENNLADGHVEAGDSVVI) form the LysM domain.

It belongs to the YneA family.

The protein resides in the cytoplasm. In terms of biological role, inhibits cell division during the SOS response. Affects a later stage of the cell division protein assembly, after the assembly of the Z ring, by probably suppressing recruitment of FtsL and/or DivIC to the division machinery. This is Cell division suppressor protein YneA from Listeria monocytogenes serotype 4b (strain CLIP80459).